Consider the following 122-residue polypeptide: MKIEASALRQLGIKQIEERAAEIKADLAALRQKKNSGDVGANDIKTAKKNLARALTVRREKILEELVEAYRGTPVSKLPKELRPKLNRSKRRALTKTQLRRKTRRQRARMSKFPRVIFAYNE.

Residues 10-69 (QLGIKQIEERAAEIKADLAALRQKKNSGDVGANDIKTAKKNLARALTVRREKILEELVEA) adopt a coiled-coil conformation.

It belongs to the universal ribosomal protein uL29 family. Component of the large ribosomal subunit.

The protein resides in the cytoplasm. This Encephalitozoon cuniculi (strain GB-M1) (Microsporidian parasite) protein is Large ribosomal subunit protein uL29A (RPL35A).